Reading from the N-terminus, the 172-residue chain is MRNLILVGPMGAGKSTIGRLLAKELRLPFKDSDKEIELRTGANIPWIFDKEGEPGFRDREQAMIAELCAADGVVLATGGGAVMRSENRHALRAGGRVVYLHASIEQQVGRTARDRNRPLLRTADPARVLSELLAIRDPFYREIADIVIETDERPPRMVVLEILARLAELPPR.

An ATP-binding site is contributed by 11-16 (GAGKST). Ser15 provides a ligand contact to Mg(2+). Positions 33, 57, and 79 each coordinate substrate. Residue Arg117 coordinates ATP. Residue Arg136 participates in substrate binding. Residue Arg153 coordinates ATP.

This sequence belongs to the shikimate kinase family. As to quaternary structure, monomer. Requires Mg(2+) as cofactor.

It localises to the cytoplasm. It catalyses the reaction shikimate + ATP = 3-phosphoshikimate + ADP + H(+). The protein operates within metabolic intermediate biosynthesis; chorismate biosynthesis; chorismate from D-erythrose 4-phosphate and phosphoenolpyruvate: step 5/7. Catalyzes the specific phosphorylation of the 3-hydroxyl group of shikimic acid using ATP as a cosubstrate. In Pseudomonas syringae pv. syringae (strain B728a), this protein is Shikimate kinase.